The following is a 250-amino-acid chain: Probable transcriptional regulatory protein Cphamn1_0542 (250 aa).

The protein belongs to the TACO1 family.

The protein resides in the cytoplasm. In Chlorobium phaeobacteroides (strain BS1), this protein is Probable transcriptional regulatory protein Cphamn1_0542.